The following is a 123-amino-acid chain: Small ribosomal subunit protein uS13 (123 aa).

The disordered stretch occupies residues R99–K123.

The protein belongs to the universal ribosomal protein uS13 family. Part of the 30S ribosomal subunit. Forms a loose heterodimer with protein S19. Forms two bridges to the 50S subunit in the 70S ribosome.

Functionally, located at the top of the head of the 30S subunit, it contacts several helices of the 16S rRNA. In the 70S ribosome it contacts the 23S rRNA (bridge B1a) and protein L5 of the 50S subunit (bridge B1b), connecting the 2 subunits; these bridges are implicated in subunit movement. Contacts the tRNAs in the A and P-sites. The protein is Small ribosomal subunit protein uS13 of Carboxydothermus hydrogenoformans (strain ATCC BAA-161 / DSM 6008 / Z-2901).